Consider the following 161-residue polypeptide: Transcription antitermination protein NusB (161 aa).

Residues 1–22 (MNLSDFKPGEGTEVPEEEKSVS) are disordered.

The protein belongs to the NusB family.

Its function is as follows. Involved in transcription antitermination. Required for transcription of ribosomal RNA (rRNA) genes. Binds specifically to the boxA antiterminator sequence of the ribosomal RNA (rrn) operons. In Hydrogenovibrio crunogenus (strain DSM 25203 / XCL-2) (Thiomicrospira crunogena), this protein is Transcription antitermination protein NusB.